We begin with the raw amino-acid sequence, 115 residues long: Tyrosine-protein phosphatase 21 (115 aa).

The region spanning 1 to 115 (WLMIVEKECR…EIGGDAPMVV (115 aa)) is the Tyrosine-protein phosphatase domain. Asp-83 contributes to the substrate binding site.

The protein belongs to the protein-tyrosine phosphatase family.

The enzyme catalyses O-phospho-L-tyrosyl-[protein] + H2O = L-tyrosyl-[protein] + phosphate. The protein is Tyrosine-protein phosphatase 21 (STY-21) of Styela plicata (Wrinkled sea squirt).